The following is a 1114-amino-acid chain: Zinc finger E-box-binding homeobox 1 (1114 aa).

2 disordered regions span residues methionine 1 to cysteine 105 and alanine 142 to proline 163. Positions proline 15–asparagine 30 are enriched in low complexity. Polar residues predominate over residues glutamine 149–asparagine 160. 3 C2H2-type zinc fingers span residues leucine 170–histidine 193, phenylalanine 200–histidine 222, and phenylalanine 240–histidine 262. The C2H2-type 4; atypical zinc-finger motif lies at tyrosine 268–cysteine 292. 4 disordered regions span residues serine 304–proline 326, asparagine 491–serine 529, lysine 553–proline 588, and glutamine 636–serine 716. A compositionally biased stretch (low complexity) spans serine 309 to proline 326. Residues lysine 504–glutamate 523 show a composition bias toward basic and acidic residues. Composition is skewed to polar residues over residues alanine 573 to proline 584 and glutamine 636 to alanine 681. Positions asparagine 581–glutamine 640 form a DNA-binding region, homeobox; atypical. Residues asparagine 682–serine 716 are compositionally biased toward low complexity. The short motif at proline 767–threonine 771 is the CTBP-binding motif element. 2 stretches are compositionally biased toward polar residues: residues alanine 852–serine 866 and serine 874–threonine 890. The disordered stretch occupies residues alanine 852–lysine 898. 2 consecutive C2H2-type zinc fingers follow at residues tyrosine 904 to histidine 926 and histidine 932 to histidine 954. The C2H2-type 7; atypical zinc-finger motif lies at tyrosine 960–histidine 981. The disordered stretch occupies residues glutamate 989–alanine 1114. Residues glutamate 1031–aspartate 1047 show a composition bias toward acidic residues. The span at valine 1048–aspartate 1062 shows a compositional bias: basic and acidic residues. Positions valine 1063–glycine 1078 are enriched in acidic residues. Residues lysine 1079–valine 1089 show a composition bias toward basic and acidic residues.

The protein belongs to the delta-EF1/ZFH-1 C2H2-type zinc-finger family. As to expression, expression is developmentally regulated with high expression in mesoderm, nervous system and lens.

It localises to the nucleus. Acts as a transcriptional repressor. Positively regulates neuronal differentiation. Represses transcription by binding to the E box-containing promoter. Binds to delta 1-crystallin enhancer core and represses lens-specific transcription. It also binds many other non-lens specific DNA sequences. This Gallus gallus (Chicken) protein is Zinc finger E-box-binding homeobox 1 (ZEB1).